An 84-amino-acid chain; its full sequence is Seminal ribonuclease (84 aa).

3 cysteine pairs are disulfide-bonded: cysteine 10-cysteine 65, cysteine 28-cysteine 80, and cysteine 35-cysteine 42. Residues lysine 11–threonine 15, lysine 36, and arginine 55 each bind substrate.

The protein belongs to the pancreatic ribonuclease family. As to quaternary structure, homodimer; disulfide-linked.

Its subcellular location is the secreted. It catalyses the reaction an [RNA] containing cytidine + H2O = an [RNA]-3'-cytidine-3'-phosphate + a 5'-hydroxy-ribonucleotide-3'-[RNA].. The catalysed reaction is an [RNA] containing uridine + H2O = an [RNA]-3'-uridine-3'-phosphate + a 5'-hydroxy-ribonucleotide-3'-[RNA].. In Giraffa camelopardalis (Giraffe), this protein is Seminal ribonuclease (SRN).